The primary structure comprises 291 residues: POU class 2 homeobox associating-factor 2 (291 aa).

The 23-residue stretch at 7–29 (KRVYQGVRVKHTVKDLLAEKRLR) folds into the OCA domain. The segment at 176–219 (AAPVADSPSLAGPDSGSSSPYRLTSGRSGSSIPSSSQPYTLQPL) is disordered. Positions 200–211 (SGRSGSSIPSSS) are enriched in low complexity.

It belongs to the POU2AF family.

Functionally, transcriptional coactivator that may regulate cell type-specific differentiation pathways. This chain is POU class 2 homeobox associating-factor 2 (pou2af2), found in Danio rerio (Zebrafish).